The primary structure comprises 166 residues: Ribosomal RNA large subunit methyltransferase H (166 aa).

Residues Leu85, Gly116, and 135 to 140 (ISKMTF) each bind S-adenosyl-L-methionine.

This sequence belongs to the RNA methyltransferase RlmH family. As to quaternary structure, homodimer.

It localises to the cytoplasm. It carries out the reaction pseudouridine(1915) in 23S rRNA + S-adenosyl-L-methionine = N(3)-methylpseudouridine(1915) in 23S rRNA + S-adenosyl-L-homocysteine + H(+). Functionally, specifically methylates the pseudouridine at position 1915 (m3Psi1915) in 23S rRNA. In Francisella tularensis subsp. holarctica (strain FTNF002-00 / FTA), this protein is Ribosomal RNA large subunit methyltransferase H.